The sequence spans 93 residues: Large ribosomal subunit protein uL23cz/uL23cy (93 aa).

Belongs to the universal ribosomal protein uL23 family. Part of the 50S ribosomal subunit.

Its subcellular location is the plastid. It is found in the chloroplast. Its function is as follows. Binds to 23S rRNA. The chain is Large ribosomal subunit protein uL23cz/uL23cy (rpl23-A) from Eucalyptus globulus subsp. globulus (Tasmanian blue gum).